Here is a 129-residue protein sequence, read N- to C-terminus: Small ribosomal subunit protein uS11 (129 aa).

It belongs to the universal ribosomal protein uS11 family. Part of the 30S ribosomal subunit. Interacts with proteins S7 and S18. Binds to IF-3.

Its function is as follows. Located on the platform of the 30S subunit, it bridges several disparate RNA helices of the 16S rRNA. Forms part of the Shine-Dalgarno cleft in the 70S ribosome. This chain is Small ribosomal subunit protein uS11, found in Hydrogenovibrio crunogenus (strain DSM 25203 / XCL-2) (Thiomicrospira crunogena).